The chain runs to 405 residues: MATQSISKIVLAYSGGLDTSAIIPWLKENYGDCEVIAFVADIGQEREDLVGIEQKALRSGAASCYVVDLRETFIKDYVYPVLKSGALYEGSYLLGTSMARPLIAKAQVELALELGADALCHGATGKGNDQVRFETTYTALAPQLQVVAPWREWDLRSREALLDYLKGRDIPTTATLEKIYSRDANAWHISTEGGVLESPWSPANQDCWVWTCAPEEAPDQPELVTVGVEKGEVVSVNGVAMTPFGCLQALNALGTRHGVGRIDIVENRLVGIKSRGCYETPGGTIMMAALRGVEQLVLDRDSFQWREKLGQEMSYVVYDGRWFAPLRQSLQAAADALADAVSGEVVIKLYKGQAIAIQKKSVNSLYNEAFATFGEDDVYDHSHAGGFIRLFSLSSRIRALNSAKQ.

Residues 12–20 (AYSGGLDTS) and A40 each bind ATP. The L-citrulline site is built by Y92 and S97. ATP is bound at residue G122. Residues T124, N128, and D129 each contribute to the L-aspartate site. Residue N128 coordinates L-citrulline. L-citrulline contacts are provided by R132, S181, S190, E266, and Y278.

The protein belongs to the argininosuccinate synthase family. Type 1 subfamily. As to quaternary structure, homotetramer.

The protein resides in the cytoplasm. It catalyses the reaction L-citrulline + L-aspartate + ATP = 2-(N(omega)-L-arginino)succinate + AMP + diphosphate + H(+). It functions in the pathway amino-acid biosynthesis; L-arginine biosynthesis; L-arginine from L-ornithine and carbamoyl phosphate: step 2/3. In Edwardsiella ictaluri (strain 93-146), this protein is Argininosuccinate synthase.